Reading from the N-terminus, the 634-residue chain is AAl-toxin cluster-specific transcription factor ALT13 (634 aa).

The segment at residues 30 to 56 is a DNA-binding region (zn(2)-C6 fungal-type); it reads CENCKRRKVRCSGANPCEQCLKVNVHC. A disordered region spans residues 66–89; that stretch reads RRSVPNSGADKNNQQGDTDRHNGA. Residues 69 to 81 are compositionally biased toward polar residues; sequence VPNSGADKNNQQG.

It localises to the nucleus. Its function is as follows. Transcription factor that regulates the expression of the gene cluster that mediates the biosynthesis of AAL-toxins, sphinganine-analog mycotoxins responsible for Alternaria stem canker on tomato by the tomato pathotype. This Alternaria alternata (Alternaria rot fungus) protein is AAl-toxin cluster-specific transcription factor ALT13.